The following is a 260-amino-acid chain: Imidazole glycerol phosphate synthase subunit HisF (260 aa).

Active-site residues include aspartate 11 and aspartate 130.

Belongs to the HisA/HisF family. In terms of assembly, heterodimer of HisH and HisF.

Its subcellular location is the cytoplasm. It carries out the reaction 5-[(5-phospho-1-deoxy-D-ribulos-1-ylimino)methylamino]-1-(5-phospho-beta-D-ribosyl)imidazole-4-carboxamide + L-glutamine = D-erythro-1-(imidazol-4-yl)glycerol 3-phosphate + 5-amino-1-(5-phospho-beta-D-ribosyl)imidazole-4-carboxamide + L-glutamate + H(+). It participates in amino-acid biosynthesis; L-histidine biosynthesis; L-histidine from 5-phospho-alpha-D-ribose 1-diphosphate: step 5/9. In terms of biological role, IGPS catalyzes the conversion of PRFAR and glutamine to IGP, AICAR and glutamate. The HisF subunit catalyzes the cyclization activity that produces IGP and AICAR from PRFAR using the ammonia provided by the HisH subunit. The protein is Imidazole glycerol phosphate synthase subunit HisF of Psychrobacter cryohalolentis (strain ATCC BAA-1226 / DSM 17306 / VKM B-2378 / K5).